Consider the following 577-residue polypeptide: 2-succinyl-5-enolpyruvyl-6-hydroxy-3-cyclohexene-1-carboxylate synthase (577 aa).

Belongs to the TPP enzyme family. MenD subfamily. Homodimer. Mg(2+) serves as cofactor. The cofactor is Mn(2+). Thiamine diphosphate is required as a cofactor.

It catalyses the reaction isochorismate + 2-oxoglutarate + H(+) = 5-enolpyruvoyl-6-hydroxy-2-succinyl-cyclohex-3-ene-1-carboxylate + CO2. Its pathway is quinol/quinone metabolism; 1,4-dihydroxy-2-naphthoate biosynthesis; 1,4-dihydroxy-2-naphthoate from chorismate: step 2/7. It participates in quinol/quinone metabolism; menaquinone biosynthesis. Its function is as follows. Catalyzes the thiamine diphosphate-dependent decarboxylation of 2-oxoglutarate and the subsequent addition of the resulting succinic semialdehyde-thiamine pyrophosphate anion to isochorismate to yield 2-succinyl-5-enolpyruvyl-6-hydroxy-3-cyclohexene-1-carboxylate (SEPHCHC). The sequence is that of 2-succinyl-5-enolpyruvyl-6-hydroxy-3-cyclohexene-1-carboxylate synthase from Porphyromonas gingivalis (strain ATCC BAA-308 / W83).